The chain runs to 144 residues: Transcriptional regulator SlyA (144 aa).

An HTH marR-type domain is found at 2–135; it reads ESSLGSDLAR…LNNIIAKLER (134 aa). A DNA-binding region (H-T-H motif) is located at residues 49–72; the sequence is QIQLAKAIGIEQPSLVRTLDQLES.

This sequence belongs to the SlyA family. As to quaternary structure, homodimer.

Its function is as follows. Transcription regulator that can specifically activate or repress expression of target genes. This Blochmanniella floridana protein is Transcriptional regulator SlyA.